A 527-amino-acid chain; its full sequence is Peptidoglycan O-acetyltransferase (527 aa).

The next 11 membrane-spanning stretches (helical) occupy residues 11–31 (VFVL…VGFL), 55–75 (LFFY…SIVF), 96–116 (LILG…TDFF), 131–151 (LHLI…AYLM), 187–207 (HFLD…GPIV), 228–248 (NIAL…VIAD), 280–300 (LYFD…FFNI), 352–372 (LILV…FIIW), 397–417 (MPKI…WVFF), 463–483 (IMYA…SFCL), and 505–525 (LLLS…FLYF). His363 is an active-site residue.

The protein belongs to the membrane-bound acyltransferase family.

The protein localises to the cell membrane. Catalyzes the O-acetylation of peptidoglycan (PG), an important mechanism that appears to confer lysozyme resistance and contributes to pathogen persistence in the host. The protein is Peptidoglycan O-acetyltransferase (patA) of Helicobacter pylori (strain ATCC 700392 / 26695) (Campylobacter pylori).